The following is a 389-amino-acid chain: Agamous-like MADS-box protein AGL65 (389 aa).

Residues 1–61 (MGRVKLKIKR…GRATAFHGEH (61 aa)) enclose the MADS-box domain. Coiled-coil stretches lie at residues 77–131 (QERT…LMEC) and 293–325 (GMEEDQEKKIKSEMELNNLQQQQQQQQQQQQQD). The segment at 310 to 343 (NLQQQQQQQQQQQQQDPSMYDPMANNNGGCFQIP) is disordered. Residues 312 to 324 (QQQQQQQQQQQQQ) are compositionally biased toward low complexity.

Forms a heterodimer with AGL104. In terms of tissue distribution, expressed in pollen.

It is found in the nucleus. Its function is as follows. Probable transcription factor that forms a heterodimer with the MADS-box protein AGL104 and is involved in the regulation of pollen maturation at the late stages of pollen development and pollen tube growth. The sequence is that of Agamous-like MADS-box protein AGL65 from Arabidopsis thaliana (Mouse-ear cress).